The primary structure comprises 70 residues: Large ribosomal subunit protein eL43 (70 aa).

Zn(2+)-binding residues include C36, C39, C55, and C58. Residues 36–58 form a C4-type zinc finger; it reads CPYCKTTGKVIRLASGIWYCKKC.

Belongs to the eukaryotic ribosomal protein eL43 family. Putative zinc-binding subfamily. Part of the 50S ribosomal subunit. Zn(2+) serves as cofactor.

Functionally, binds to the 23S rRNA. This is Large ribosomal subunit protein eL43 from Saccharolobus solfataricus (strain ATCC 35092 / DSM 1617 / JCM 11322 / P2) (Sulfolobus solfataricus).